The primary structure comprises 509 residues: Putative thymidine phosphorylase (509 aa).

It belongs to the thymidine/pyrimidine-nucleoside phosphorylase family. Type 2 subfamily.

It catalyses the reaction thymidine + phosphate = 2-deoxy-alpha-D-ribose 1-phosphate + thymine. This is Putative thymidine phosphorylase from Chelativorans sp. (strain BNC1).